The chain runs to 243 residues: Transcription factor TFIIS homolog (243 aa).

The region spanning 77–201 is the TFIIS central domain; that stretch reads MRDIIQMMFF…SQQKVAEKTS (125 aa). The TFIIS-type zinc finger occupies 202-242; sequence QLYKCPNCKQRMCTYREVQTRALDEPSTIFCTCKKCGHEFI. Residues C206, C209, C234, and C237 each contribute to the Zn(2+) site.

The protein belongs to the TFS-II family.

Functionally, putative initiation factor. Necessary for efficient transcription elongation past template-encoded arresting sites. This Ornithodoros (relapsing fever ticks) protein is Transcription factor TFIIS homolog.